We begin with the raw amino-acid sequence, 368 residues long: Meiotic driver wtf23 (368 aa).

The tract at residues 1-98 (MKNKYYPLRS…SSGTADNSST (98 aa)) is disordered. Over residues 11–29 (SMDELSAKNDNEIDLEKGP) the composition is skewed to basic and acidic residues. Composition is skewed to polar residues over residues 57 to 72 (GANN…STTP) and 89 to 98 (SSGTADNSST). Helical transmembrane passes span 105–124 (FLSF…YLTY), 139–158 (YFGV…WYFY), 170–192 (IFLA…VISI), 202–221 (MIII…GCVK), 234–256 (STCT…FWTF), 266–283 (VFLL…TMFL), and 328–350 (GIAF…FRGG).

It belongs to the WTF family. Homomer. Forms protein aggregates. The two isoforms can interact with each other and with themselves. High sequence similarity is required for their interaction.

The protein localises to the spore membrane. Its subcellular location is the vacuole membrane. It localises to the ascus epiplasm. It is found in the cytoplasm. The protein resides in the endoplasmic reticulum membrane. Promotes unequal transmission of alleles from the parental zygote to progeny spores by acting as poison/antidote system where the poison and antidote proteins are produced from the same locus; the poison component is trans-acting and targets all spores within an ascus whereas the antidote component is spore-specific, leading to poisoning of all progeny that do not inherit the allele. In terms of biological role, localizes isoform 2 to the vacuole thereby facilitating its degradation. Functionally, forms toxic aggregates that disrupt spore maturation. The protein is Meiotic driver wtf23 of Schizosaccharomyces pombe (strain 972 / ATCC 24843) (Fission yeast).